The chain runs to 300 residues: Transcription factor DUO1 (300 aa).

HTH myb-type domains follow at residues 8–64 (KEEI…RPNL) and 65–116 (KNGC…KRLA). DNA-binding regions (H-T-H motif) lie at residues 36-60 (WSSI…VNKL) and 89-112 (WARI…SSRQ). Low complexity predominate over residues 123–135 (SDASSSSFNPKSS). The disordered stretch occupies residues 123–145 (SDASSSSFNPKSSSSHRLKGKNV). Positions 136 to 145 (SSHRLKGKNV) are enriched in basic residues.

Confined to inflorescences, especially in stamens and pollen.

It localises to the nucleus. Functionally, transcription activator that acts as a positive regulator of male germline development by promoting both gametic cell specification and cell cycle progression. Binds to canonical MYB sites 5'-AACCGTC-3', 5'-AAACCGC-3' and 5'-AACCGT-3' in promoters to trigger the expression of male germline-specific or enriched genes (e.g. MGH3, GEX2 and GCS1), including those required for fertilization. Required for sperm cell specification leading to pollen maturation by activating a germline-specific regulon. Involved in pollen mitosis entry at G2-M transition via the regulation of CYCB1-1, DAZ1 and DAZ2 expression. The chain is Transcription factor DUO1 from Arabidopsis thaliana (Mouse-ear cress).